Here is a 1108-residue protein sequence, read N- to C-terminus: DNA-directed RNA polymerase subunit beta (1108 aa).

Residues 1081 to 1108 (SPRRTPARPTIDYSALDDTDDKEGATTF) are disordered.

This sequence belongs to the RNA polymerase beta chain family. In cyanobacteria the RNAP catalytic core is composed of 2 alpha, 1 beta, 1 beta', 1 gamma and 1 omega subunit. When a sigma factor is associated with the core the holoenzyme is formed, which can initiate transcription.

It carries out the reaction RNA(n) + a ribonucleoside 5'-triphosphate = RNA(n+1) + diphosphate. DNA-dependent RNA polymerase catalyzes the transcription of DNA into RNA using the four ribonucleoside triphosphates as substrates. In Thermosynechococcus vestitus (strain NIES-2133 / IAM M-273 / BP-1), this protein is DNA-directed RNA polymerase subunit beta.